The chain runs to 153 residues: Ribosome maturation factor RimP (153 aa).

This sequence belongs to the RimP family.

The protein resides in the cytoplasm. In terms of biological role, required for maturation of 30S ribosomal subunits. The chain is Ribosome maturation factor RimP from Pelotomaculum thermopropionicum (strain DSM 13744 / JCM 10971 / SI).